The following is a 75-amino-acid chain: UPF0352 protein plu2871 (75 aa).

Belongs to the UPF0352 family.

The sequence is that of UPF0352 protein plu2871 from Photorhabdus laumondii subsp. laumondii (strain DSM 15139 / CIP 105565 / TT01) (Photorhabdus luminescens subsp. laumondii).